Here is a 511-residue protein sequence, read N- to C-terminus: Maturase K (511 aa).

The protein belongs to the intron maturase 2 family. MatK subfamily.

The protein localises to the plastid. It localises to the chloroplast. In terms of biological role, usually encoded in the trnK tRNA gene intron. Probably assists in splicing its own and other chloroplast group II introns. The sequence is that of Maturase K from Avena sativa (Oat).